Reading from the N-terminus, the 302-residue chain is MDVKVKNRDFWYSLHGQVPGMLDWDMGNEFFLPCTMDQCSFAEQSLAKYKIQLTKPPALPQKKKSNFDDDGPPAEPSLWMWVNPNIVCPINSKEAPNTIHKILPSAPFPQTGESDYLGTQRMVQSLSVLHTEHHQQQKLLIYSTAPDFIEEETKEQECTSSKKYSKKHTVCHGPHREKESWPRPPLNYSHLVALALKSSPSCGLNVQQIYNFTRQHFPYFRTAPEGWKNTIRHNLCSLTCFEKVPVDLEDEPDGKPRSFLWKLTDEGNRFFQEDTRVLAYARRESIKQSMRQPELIDLLFHL.

The fork-head DNA-binding region spans 183–285; the sequence is RPPLNYSHLV…RVLAYARRES (103 aa).

The protein localises to the nucleus. The polypeptide is Forkhead box protein R2 (Foxr2) (Mus musculus (Mouse)).